Reading from the N-terminus, the 539-residue chain is Chaperonin GroEL 1 (539 aa).

ATP-binding positions include 29–32 (TLGP), 86–90 (DGTTT), Gly-413, and Asp-495.

Belongs to the chaperonin (HSP60) family. As to quaternary structure, forms a cylinder of 14 subunits composed of two heptameric rings stacked back-to-back. Interacts with the co-chaperonin GroES.

Its subcellular location is the cytoplasm. The catalysed reaction is ATP + H2O + a folded polypeptide = ADP + phosphate + an unfolded polypeptide.. In terms of biological role, together with its co-chaperonin GroES, plays an essential role in assisting protein folding. The GroEL-GroES system forms a nano-cage that allows encapsulation of the non-native substrate proteins and provides a physical environment optimized to promote and accelerate protein folding. The protein is Chaperonin GroEL 1 of Mycobacterium bovis (strain ATCC BAA-935 / AF2122/97).